We begin with the raw amino-acid sequence, 460 residues long: Asparagine--tRNA ligase (460 aa).

The protein belongs to the class-II aminoacyl-tRNA synthetase family. As to quaternary structure, homodimer.

Its subcellular location is the cytoplasm. It catalyses the reaction tRNA(Asn) + L-asparagine + ATP = L-asparaginyl-tRNA(Asn) + AMP + diphosphate + H(+). This chain is Asparagine--tRNA ligase, found in Picosynechococcus sp. (strain ATCC 27264 / PCC 7002 / PR-6) (Agmenellum quadruplicatum).